A 104-amino-acid chain; its full sequence is Fusaric acid biosynthesis protein 2 (104 aa).

Belongs to the YciI family.

The protein operates within mycotoxin biosynthesis. Functionally, part of the gene cluster that mediates the biosynthesis of fusaric acid, a mycotoxin with low to moderate toxicity to animals and humans, but with high phytotoxic properties. L-aspartate is suggested as fusaric acid amino acid precursor that is activated and further processed to O-acetyl-L-homoserine by cluster enzymes aspartate kinase FUB3 and homoserine O-acetyltransferase FUB5, as well as enzymes of the primary metabolism. The polyketide synthase (PKS) FUB1 generates the triketide trans-2-hexenal which is presumptively released by the hydrolase FUB4 and linked to the NRPS-bound amino acid precursor by NAD(P)-dependent dehydrogenase FUB6. FUB1, FUB4, and the non-canonical NRPS Fub8 may form an enzyme complex. Further processing of the NRPS-bound intermediate might be carried out by FUB6 and the sulfhydrylase FUB7, enabling a spontaneous electrocyclization to close the carbon backbone of fusaric acid. Dihydrofusaric acid is likely to be released via reduction by the thioester reductase (TR) domain of FUB8 whereupon the final oxidation to fusaric acid may (also) be performed by the FMN-dependent dehydrogenase FUB9. The sequence is that of Fusaric acid biosynthesis protein 2 from Gibberella fujikuroi (strain CBS 195.34 / IMI 58289 / NRRL A-6831) (Bakanae and foot rot disease fungus).